Here is a 115-residue protein sequence, read N- to C-terminus: uncharacterized protein (115 aa).

The interval 1–74 (MGTGLRSQSL…VPGSLGDTEQ (74 aa)) is disordered.

This is an uncharacterized protein from Homo sapiens (Human).